The primary structure comprises 166 residues: Succinate dehydrogenase [ubiquinone] cytochrome b small subunit, mitochondrial (166 aa).

The Mitochondrial matrix segment spans residues 1 to 65; that stretch reads MASVARSSAL…VPPPSPSHGS (65 aa). The helical transmembrane segment at 66–87 threads the bilayer; the sequence is YHWTFDRVVAAGLIPLTVAPFA. Topologically, residues 88 to 94 are mitochondrial intermembrane; the sequence is AGSLNPT. A helical transmembrane segment spans residues 95-115; the sequence is MDAVLAATILIHSHTGFGNII. A heme-binding site is contributed by His106. Residues 116-124 lie on the Mitochondrial matrix side of the membrane; the sequence is VDYVPSKRV. Tyr118 provides a ligand contact to a ubiquinone. The chain crosses the membrane as a helical span at residues 125 to 149; sequence PKARKVFTWGLNAATVLVGLALYEF. The Mitochondrial intermembrane portion of the chain corresponds to 150–166; that stretch reads ETTDVGLTETIKRVWKA.

It belongs to the CybS family. As to quaternary structure, forms part of complex II containing four subunits: a flavoprotein (FP), an iron-sulfur protein (IP) and a cytochrome b composed of a large and a small subunit.

It localises to the mitochondrion inner membrane. The protein operates within carbohydrate metabolism; tricarboxylic acid cycle. Membrane-anchoring subunit of succinate dehydrogenase (SDH) that is involved in complex II of the mitochondrial electron transport chain and is responsible for transferring electrons from succinate to ubiquinone (coenzyme Q). The sequence is that of Succinate dehydrogenase [ubiquinone] cytochrome b small subunit, mitochondrial from Neurospora crassa (strain ATCC 24698 / 74-OR23-1A / CBS 708.71 / DSM 1257 / FGSC 987).